A 129-amino-acid chain; its full sequence is MAKTPTRARKRVKKQVADGMAHIHASFNNTIVTITDRQGNALSWATAGGSGFRGSRKSTPFAAQIAAERAAEAAKEYGLKNVEVFVNGPGPGRESSIRALNAAGFRVTNITDVTPIPHNGCRPPKKRRV.

Belongs to the universal ribosomal protein uS11 family. Part of the 30S ribosomal subunit. Interacts with proteins S7 and S18. Binds to IF-3.

Its function is as follows. Located on the platform of the 30S subunit, it bridges several disparate RNA helices of the 16S rRNA. Forms part of the Shine-Dalgarno cleft in the 70S ribosome. This Psychromonas ingrahamii (strain DSM 17664 / CCUG 51855 / 37) protein is Small ribosomal subunit protein uS11.